Consider the following 305-residue polypeptide: MIKQRTLKTSVSTVGVGLHKGEKVQVTLRPAPANTGIVFRRVDLDPVVDIKASPEAVGETTLCTCLVNEQQVKVSTVEHLLSAVAGLGIDNLIIDVDSAEIPIMDGSALPFVYLIQSVGIETLNAPKRFLRIKKPIRVEEGDKWAELLPYEGFRVNFSIEFEHPVIEKTCQTMSMDFSSCSFIKEISRARTFGFMKDIEFLRSHNLALGGSLENAIVLDNYRMLNKNELRYDDEFVKHKILDAIGDLYMGSASILGELNAFKSGHGLNNLLLREVFKRTDSWEWVTYEGDKTSPIEYQEVNATAF.

Residues His79, His238, and Asp242 each coordinate Zn(2+). The active-site Proton donor is His265.

It belongs to the LpxC family. It depends on Zn(2+) as a cofactor.

It catalyses the reaction a UDP-3-O-[(3R)-3-hydroxyacyl]-N-acetyl-alpha-D-glucosamine + H2O = a UDP-3-O-[(3R)-3-hydroxyacyl]-alpha-D-glucosamine + acetate. The protein operates within glycolipid biosynthesis; lipid IV(A) biosynthesis; lipid IV(A) from (3R)-3-hydroxytetradecanoyl-[acyl-carrier-protein] and UDP-N-acetyl-alpha-D-glucosamine: step 2/6. Catalyzes the hydrolysis of UDP-3-O-myristoyl-N-acetylglucosamine to form UDP-3-O-myristoylglucosamine and acetate, the committed step in lipid A biosynthesis. The polypeptide is UDP-3-O-acyl-N-acetylglucosamine deacetylase (Colwellia psychrerythraea (strain 34H / ATCC BAA-681) (Vibrio psychroerythus)).